The sequence spans 250 residues: MNILITNDDGIASSGIKALEAVLQKEHDTFLIAPLRERSATSMALSIYDSMRVERINDNHYIVDGYPADCVNIGLHGDIFPRIDLVLSGINRGVNMGHDIHYSGTVGAARHGAVHSRLSLAVSSGNITKDYDYIREAEFVRYFIDEYSSLLKVGVVYNMNIPFDFVSSMENLRITRLGKRTYEDTYSKKNIIGGIADFYLGGSKLEHATEEGTDFTAFFSGKISLTPLSLDQTDISLVQELSDTLSKSLS.

A divalent metal cation is bound by residues aspartate 8, aspartate 9, serine 39, and asparagine 91.

It belongs to the SurE nucleotidase family. A divalent metal cation is required as a cofactor.

The protein localises to the cytoplasm. The enzyme catalyses a ribonucleoside 5'-phosphate + H2O = a ribonucleoside + phosphate. Its function is as follows. Nucleotidase that shows phosphatase activity on nucleoside 5'-monophosphates. This Leptospira borgpetersenii serovar Hardjo-bovis (strain L550) protein is 5'-nucleotidase SurE.